The chain runs to 421 residues: GTPase Obg (421 aa).

One can recognise an Obg domain in the interval 1-158; that stretch reads MFIDVAKIEL…KTIKLELKLL (158 aa). The disordered stretch occupies residues 21–40; it reads AFRREKYEPSGGPAGGDGGD. The region spanning 159 to 328 is the OBG-type G domain; sequence ADVGLIGLPN…LMYLIADTLD (170 aa). GTP is bound by residues 165–172, 190–194, 211–214, 281–284, and 309–311; these read GLPNVGKS, FTTLE, DIPG, NKTD, and SAA. S172 and T192 together coordinate Mg(2+). The OCT domain maps to 344 to 421; that stretch reads FEEEKEPDFK…IGDVEFDFYE (78 aa).

It belongs to the TRAFAC class OBG-HflX-like GTPase superfamily. OBG GTPase family. Monomer. Mg(2+) is required as a cofactor.

Its subcellular location is the cytoplasm. Its function is as follows. An essential GTPase which binds GTP, GDP and possibly (p)ppGpp with moderate affinity, with high nucleotide exchange rates and a fairly low GTP hydrolysis rate. Plays a role in control of the cell cycle, stress response, ribosome biogenesis and in those bacteria that undergo differentiation, in morphogenesis control. The chain is GTPase Obg from Finegoldia magna (strain ATCC 29328 / DSM 20472 / WAL 2508) (Peptostreptococcus magnus).